A 2266-amino-acid polypeptide reads, in one-letter code: Little elongation complex subunit 1 (2266 aa).

Residues 23 to 186 (CASLQQNLNE…KQKNEKELRH (164 aa)) are a coiled coil. Disordered stretches follow at residues 223 to 259 (GEGS…PLRT) and 517 to 540 (PAQE…KRPL). The span at 250 to 259 (PPTQGSPLRT) shows a compositional bias: polar residues. Ser-255, Ser-533, Ser-558, and Ser-589 each carry phosphoserine. The tract at residues 591–623 (ELEKEKEDTQGFTLGESPESEDDDSGDGMDVAG) is disordered. Acidic residues predominate over residues 608–617 (PESEDDDSGD). Phosphoserine is present on Ser-707. Thr-832 is subject to Phosphothreonine. At Ser-925 the chain carries Phosphoserine. The tract at residues 925–955 (SPEVSASRRKLDFNSPGGSSPVENSDCSTNS) is disordered. Residues 940–955 (PGGSSPVENSDCSTNS) are compositionally biased toward polar residues. Ser-958 carries the phosphoserine modification. Disordered regions lie at residues 977–1001 (VQGD…HGSE) and 1107–1133 (TEVE…QKNL). Residues 984 to 998 (QRQPQATDLDSSGTH) are compositionally biased toward polar residues. Lys-1218 is modified (N6-acetyllysine). Disordered stretches follow at residues 1295–1372 (TTEN…PSAL), 1467–1510 (AEKS…KSRL), and 1543–1707 (NSKL…SASE). 5 stretches are compositionally biased toward polar residues: residues 1306–1319 (RETT…SEPT), 1328–1344 (EGSS…NPQS), 1487–1505 (NNLS…STNF), 1565–1588 (NKPV…QSFS), and 1594–1605 (TKTQRSQTQTIL). Phosphoserine is present on Ser-1588. Low complexity-rich tracts occupy residues 1609–1620 (DTSTPTDCSPDT) and 1637–1671 (APLI…QVSP). Ser-1617 is modified (phosphoserine). Thr-1642 carries the phosphothreonine modification. Residues Ser-1692, Ser-1697, Ser-1699, Ser-1701, Ser-1712, Ser-1838, and Ser-1854 each carry the phosphoserine modification. Positions 1809 to 1902 (TGSSSGGDCN…AVSAVSQLPL (94 aa)) are disordered. Residues 1825–1843 (LGTQQDSSGKRTLSTSTLR) show a composition bias toward polar residues. A compositionally biased stretch (polar residues) spans 1889–1901 (CSSPAVSAVSQLP). Ser-1903 is modified (phosphoserine).

Belongs to the ICE1 family. In terms of assembly, component of the little elongation complex (LEC), at least composed of ELL (ELL, ELL2 or ELL3), ZC3H8, ICE1 and ICE2. Interacts (via N-terminus domain) with ELL. Interacts (via C-terminus domain) with ICE2 and ZC3H8.

The protein localises to the nucleus. It is found in the cajal body. In terms of biological role, component of the little elongation complex (LEC), a complex required to regulate small nuclear RNA (snRNA) gene transcription by RNA polymerase II and III. Specifically acts as a scaffold protein that promotes the LEC complex formation and recruitment and RNA polymerase II occupancy at snRNA genes in subnuclear bodies. This chain is Little elongation complex subunit 1 (ICE1), found in Homo sapiens (Human).